The sequence spans 359 residues: Membrane-bound lytic murein transglycosylase C (359 aa).

The first 16 residues, 1 to 16, serve as a signal peptide directing secretion; it reads MKKYLALALIAPLLIS. The N-palmitoyl cysteine moiety is linked to residue Cys-17. Cys-17 carries S-diacylglycerol cysteine lipidation.

Belongs to the transglycosylase Slt family.

It is found in the cell outer membrane. It catalyses the reaction Exolytic cleavage of the (1-&gt;4)-beta-glycosidic linkage between N-acetylmuramic acid (MurNAc) and N-acetylglucosamine (GlcNAc) residues in peptidoglycan, from either the reducing or the non-reducing ends of the peptidoglycan chains, with concomitant formation of a 1,6-anhydrobond in the MurNAc residue.. Functionally, murein-degrading enzyme. May play a role in recycling of muropeptides during cell elongation and/or cell division. This Shigella dysenteriae serotype 1 (strain Sd197) protein is Membrane-bound lytic murein transglycosylase C.